We begin with the raw amino-acid sequence, 102 residues long: Small ribosomal subunit protein uS10 (102 aa).

Belongs to the universal ribosomal protein uS10 family. As to quaternary structure, part of the 30S ribosomal subunit.

In terms of biological role, involved in the binding of tRNA to the ribosomes. This chain is Small ribosomal subunit protein uS10, found in Rhizobium meliloti (strain 1021) (Ensifer meliloti).